Here is a 581-residue protein sequence, read N- to C-terminus: MSKDLDKEDILYKKRHSIAHVMAEAVLDLFPNTKIAIGPPIKDGFYYDFEFKKQITEDSLLDIENRMREILKTGSSFEKEIISVEQALEIFKDEPYKIDLIKNFDLQNEVSIYKSHNFVDLCRGPHVENMNKIDPKAFKLTSIAGAYWRGSEKNPMLTRIYGTLWNNEKELRSYLNLREEIKKRDHRKLGKELDLFSIHEEIGPGLVFFHPNGAKIRALIEDFWREEHSKNGYDILFTPHIGKSWLWQTSGHLDFYKDSMFEKIEMDKSDYYLKPMNCPFHIAIYNTGKHSYRDLPFRWAELGTVYRYEKIGALHGMMRARGFTQDDAHIICTHSQVLDEIKEVLRFAIYMWSKFGFSNPKAYLSTKPDKSVGNDSDWEMSLKVLEETLSDFEVPYEIDKGGGAFYGPKIDLKIVDSLEREWQMSTIQFDFNLPERFNMTYTAEDGKEKRPFMIHRALLGSIERFFGILVEHYGGAFPLWLSPVQVVIIPVNNIVEDYAIKVFNKFKNEGIRIKLDNSSSRMNAKIREYQAKKIPYMFIIGEREATEERISIRTRTNEQINGMKLDEALKFILFKIRDKEI.

Positions 185–478 (DHRKLGKELD…LVEHYGGAFP (294 aa)) are catalytic. Zn(2+)-binding residues include cysteine 278, histidine 329, and histidine 455.

This sequence belongs to the class-II aminoacyl-tRNA synthetase family. In terms of assembly, homodimer. It depends on Zn(2+) as a cofactor.

The protein localises to the cytoplasm. The enzyme catalyses tRNA(Thr) + L-threonine + ATP = L-threonyl-tRNA(Thr) + AMP + diphosphate + H(+). Catalyzes the attachment of threonine to tRNA(Thr) in a two-step reaction: L-threonine is first activated by ATP to form Thr-AMP and then transferred to the acceptor end of tRNA(Thr). Also edits incorrectly charged L-seryl-tRNA(Thr). The polypeptide is Threonine--tRNA ligase (Borreliella burgdorferi (strain ATCC 35210 / DSM 4680 / CIP 102532 / B31) (Borrelia burgdorferi)).